We begin with the raw amino-acid sequence, 107 residues long: Iron-binding protein IscA (107 aa).

Residues cysteine 35, cysteine 99, and cysteine 101 each contribute to the Fe cation site.

The protein belongs to the HesB/IscA family. As to quaternary structure, homodimer; may form tetramers and higher multimers. Fe cation serves as cofactor.

In terms of biological role, is able to transfer iron-sulfur clusters to apo-ferredoxin. Multiple cycles of [2Fe2S] cluster formation and transfer are observed, suggesting that IscA acts catalytically. Recruits intracellular free iron so as to provide iron for the assembly of transient iron-sulfur cluster in IscU in the presence of IscS, L-cysteine and the thioredoxin reductase system TrxA/TrxB. In Yersinia pestis bv. Antiqua (strain Angola), this protein is Iron-binding protein IscA.